The chain runs to 413 residues: MATPVRDETRNVIDDNISARIQSKVKTNDTVRQTPSSLRKVSIKDEQVKQYQRNLNRFKTILNGLKAEEEKLSETDDIQMLAEKLLKLGETIDKVENRIVDLVEKIQLLETNENNNILHEHIDATGTYYLFDTLTSTNKRFYPKDCVFDYRTNNVENIPILLNNFKKFIKKYQFDDVFENDIIEIDPRENEILCKIIKEGLGESLDIMNTNTTDIFRIIDGLKNKYRSLHGRDVRIRAWEKVLVDTTCRNSALLMNKLQKLVLMEKWIFSKCCQDCPNLKDYLQEAIMGTLHESLRNSVKQRLYNIPHNVGINHEEFLINTVIETVIDLSPIADDQIENSCMYCKSVFHCSINCKKKPNRELRPDSTNFSKTYYLQGAQRQQQLKSSAKRTKVLEQDTKKVKQSVQQQKTGNY.

A coiled-coil region spans residues 39–115 (RKVSIKDEQV…IQLLETNENN (77 aa)). The interval 380–413 (RQQQLKSSAKRTKVLEQDTKKVKQSVQQQKTGNY) is disordered. Over residues 403 to 413 (QSVQQQKTGNY) the composition is skewed to low complexity.

Capsid protein (CA) is the structural component of the virus-like particle (VLP), forming the shell that encapsulates the retrotransposons dimeric RNA genome. The chain is Transposon Ty4-H Gag polyprotein (TY4A-H) from Saccharomyces cerevisiae (strain ATCC 204508 / S288c) (Baker's yeast).